Reading from the N-terminus, the 342-residue chain is Anthranilate phosphoribosyltransferase (342 aa).

Residues glycine 83, 86 to 87, threonine 91, 93 to 96, 111 to 119, and serine 123 each bind 5-phospho-alpha-D-ribose 1-diphosphate; these read GD, NIST, and KHGGRSVSS. Glycine 83 serves as a coordination point for anthranilate. Serine 95 lines the Mg(2+) pocket. Anthranilate is bound at residue arginine 169. Residues aspartate 228 and glutamate 229 each contribute to the Mg(2+) site.

The protein belongs to the anthranilate phosphoribosyltransferase family. In terms of assembly, homodimer. It depends on Mg(2+) as a cofactor.

The enzyme catalyses N-(5-phospho-beta-D-ribosyl)anthranilate + diphosphate = 5-phospho-alpha-D-ribose 1-diphosphate + anthranilate. It functions in the pathway amino-acid biosynthesis; L-tryptophan biosynthesis; L-tryptophan from chorismate: step 2/5. Functionally, catalyzes the transfer of the phosphoribosyl group of 5-phosphorylribose-1-pyrophosphate (PRPP) to anthranilate to yield N-(5'-phosphoribosyl)-anthranilate (PRA). This chain is Anthranilate phosphoribosyltransferase, found in Chromobacterium violaceum (strain ATCC 12472 / DSM 30191 / JCM 1249 / CCUG 213 / NBRC 12614 / NCIMB 9131 / NCTC 9757 / MK).